The chain runs to 312 residues: Pantothenate kinase (312 aa).

97–104 lines the ATP pocket; the sequence is GSVAVGKS.

It belongs to the prokaryotic pantothenate kinase family.

It localises to the cytoplasm. The enzyme catalyses (R)-pantothenate + ATP = (R)-4'-phosphopantothenate + ADP + H(+). It functions in the pathway cofactor biosynthesis; coenzyme A biosynthesis; CoA from (R)-pantothenate: step 1/5. This chain is Pantothenate kinase, found in Mycobacterium sp. (strain JLS).